Here is a 283-residue protein sequence, read N- to C-terminus: Calpastatin (283 aa).

Over residues Met1–Met15 the composition is skewed to polar residues. Disordered stretches follow at residues Met1–Met186 and Asn212–Lys283. The segment covering Pro21 to Ala30 has biased composition (basic residues). Residue Lys32 forms a Glycyl lysine isopeptide (Lys-Gly) (interchain with G-Cter in SUMO2) linkage. Over residues Val46–Ser65 the composition is skewed to basic and acidic residues. Lys50 is modified (N6-acetyllysine). A Phosphoserine modification is found at Ser87. The span at Val107 to Gly122 shows a compositional bias: low complexity. Position 133 is a phosphoserine (Ser133). Thr135 carries the post-translational modification Phosphothreonine. The stretch at Ile170–Ser222 is one Inhibitory domain 1 repeat. 2 positions are modified to phosphoserine: Ser222 and Ser243. Over residues Lys249–Glu258 the composition is skewed to basic and acidic residues.

This sequence belongs to the protease inhibitor I27 (calpastatin) family.

Specific inhibition of calpain (calcium-dependent cysteine protease). Plays a key role in postmortem tenderization of meat and have been proposed to be involved in muscle protein degradation in living tissue. This is Calpastatin (CAST) from Chlorocebus aethiops (Green monkey).